We begin with the raw amino-acid sequence, 146 residues long: Protein translocase subunit SecE (146 aa).

The interval 1–81 is disordered; sequence MSDERYAASD…KVKKPKKSAD (81 aa). A compositionally biased stretch (gly residues) spans 10–20; sequence DGGGTEVGSGT. Over residues 45 to 54 the composition is skewed to polar residues; it reads RAANASNTGA. The segment covering 69–81 has biased composition (basic and acidic residues); the sequence is KEGKVKKPKKSAD. Residues 118–138 form a helical membrane-spanning segment; sequence VVLAFLAFMVALVGLADFGLA.

It belongs to the SecE/SEC61-gamma family. As to quaternary structure, component of the Sec protein translocase complex. Heterotrimer consisting of SecY, SecE and SecG subunits. The heterotrimers can form oligomers, although 1 heterotrimer is thought to be able to translocate proteins. Interacts with the ribosome. Interacts with SecDF, and other proteins may be involved. Interacts with SecA.

Its subcellular location is the cell membrane. Functionally, essential subunit of the Sec protein translocation channel SecYEG. Clamps together the 2 halves of SecY. May contact the channel plug during translocation. The chain is Protein translocase subunit SecE from Mycobacterium leprae (strain TN).